Consider the following 164-residue polypeptide: Thiol peroxidase (164 aa).

Positions 16–162 constitute a Thioredoxin domain; sequence LQVGDIAKDF…YEAAINAAKI (147 aa). Residue C58 is the Cysteine sulfenic acid (-SOH) intermediate of the active site. The cysteines at positions 58 and 92 are disulfide-linked.

The protein belongs to the peroxiredoxin family. Tpx subfamily. Homodimer.

It catalyses the reaction a hydroperoxide + [thioredoxin]-dithiol = an alcohol + [thioredoxin]-disulfide + H2O. In terms of biological role, thiol-specific peroxidase that catalyzes the reduction of hydrogen peroxide and organic hydroperoxides to water and alcohols, respectively. Plays a role in cell protection against oxidative stress by detoxifying peroxides. The polypeptide is Thiol peroxidase (Streptococcus agalactiae serotype III (strain NEM316)).